Here is a 621-residue protein sequence, read N- to C-terminus: 1-deoxy-D-xylulose-5-phosphate synthase (621 aa).

Thiamine diphosphate is bound by residues H80 and 121–123 (GHS). D152 is a binding site for Mg(2+). Thiamine diphosphate-binding positions include 153–154 (GA), N181, Y288, and E370. N181 lines the Mg(2+) pocket.

Belongs to the transketolase family. DXPS subfamily. As to quaternary structure, homodimer. Mg(2+) is required as a cofactor. It depends on thiamine diphosphate as a cofactor.

It catalyses the reaction D-glyceraldehyde 3-phosphate + pyruvate + H(+) = 1-deoxy-D-xylulose 5-phosphate + CO2. The protein operates within metabolic intermediate biosynthesis; 1-deoxy-D-xylulose 5-phosphate biosynthesis; 1-deoxy-D-xylulose 5-phosphate from D-glyceraldehyde 3-phosphate and pyruvate: step 1/1. Its function is as follows. Catalyzes the acyloin condensation reaction between C atoms 2 and 3 of pyruvate and glyceraldehyde 3-phosphate to yield 1-deoxy-D-xylulose-5-phosphate (DXP). The protein is 1-deoxy-D-xylulose-5-phosphate synthase of Pseudoalteromonas atlantica (strain T6c / ATCC BAA-1087).